The chain runs to 401 residues: 8-amino-7-oxononanoate synthase (401 aa).

Position 24 (R24) interacts with substrate. Position 111–112 (111–112) interacts with pyridoxal 5'-phosphate; that stretch reads GF. Residue H137 participates in substrate binding. Residues S183, H211, and T240 each contribute to the pyridoxal 5'-phosphate site. N6-(pyridoxal phosphate)lysine is present on K243. T357 contributes to the substrate binding site.

This sequence belongs to the class-II pyridoxal-phosphate-dependent aminotransferase family. BioF subfamily. As to quaternary structure, homodimer. The cofactor is pyridoxal 5'-phosphate.

The catalysed reaction is 6-carboxyhexanoyl-[ACP] + L-alanine + H(+) = (8S)-8-amino-7-oxononanoate + holo-[ACP] + CO2. Its pathway is cofactor biosynthesis; biotin biosynthesis. Functionally, catalyzes the decarboxylative condensation of pimeloyl-[acyl-carrier protein] and L-alanine to produce 8-amino-7-oxononanoate (AON), [acyl-carrier protein], and carbon dioxide. This chain is 8-amino-7-oxononanoate synthase, found in Xylella fastidiosa (strain M23).